The chain runs to 477 residues: Cytochrome b mRNA maturase bI3 (477 aa).

Positions 1 to 163 (MRLLKSHPLL…IPWIGQDIVE (163 aa)) are cytochrome b. A run of 5 helical transmembrane segments spans residues 32–52 (FGSL…TLAM), 86–106 (ASAF…YGSY), 113–133 (VWAI…LGYV), 142–162 (WGAT…QDIV), and 166–186 (IITL…VVVY). The maturase stretch occupies residues 164–477 (SKIITLIINL…YSTLNYPDAK (314 aa)).

This sequence in the N-terminal section; belongs to the cytochrome b family. It in the C-terminal section; belongs to the LAGLIDADG endonuclease family.

The protein localises to the mitochondrion inner membrane. In terms of biological role, mitochondrial mRNA maturase required for splicing of intron 3 of the cytochrome b (cob) gene, containing its own coding sequence. This chain is Cytochrome b mRNA maturase bI3 (bI3), found in Neurospora crassa (strain ATCC 24698 / 74-OR23-1A / CBS 708.71 / DSM 1257 / FGSC 987).